Reading from the N-terminus, the 1176-residue chain is 3-hydroxy-3-methylglutaryl-coenzyme A reductase (1176 aa).

The Cytoplasmic portion of the chain corresponds to 1–34 (MSLPNHSGSSAFKSFSYIVGTGIKRAAKLSTRNP). Residues 35-55 (IEMIVVVLILSSFSYFYLFNL) traverse the membrane as a helical segment. Residues 56-299 (ARTSDIFSGT…VKELIDLADN (244 aa)) lie on the Lumenal side of the membrane. N-linked (GlcNAc...) asparagine glycosylation is found at Asn-224 and Asn-238. Residues 300 to 320 (IDIIVILVGYIMMIATFISLY) traverse the membrane as a helical segment. The SSD domain maps to 301–465 (DIIVILVGYI…FTWYTAVLAL (165 aa)). At 321–330 (VNMRAMGSRY) the chain is on the cytoplasmic side. The chain crosses the membrane as a helical span at residues 331–351 (TLATAVVFNGFFSFMLALLTV). Residues 352 to 355 (RALG) lie on the Lumenal side of the membrane. Residues 356-376 (VDVYPVVLAEAIPFLAVTIGF) form a helical membrane-spanning segment. Over 377–422 (ERPFKLTKRVFQFSKETPLTKQEIRTTIMRAVDTVALPIARDCFME) the chain is Cytoplasmic. The helical transmembrane segment at 423-443 (IIVLVLGAKSGISGLEEFCLL) threads the bilayer. Ser-444 is a topological domain (lumenal). A helical membrane pass occupies residues 445–465 (AILLAYDFIIMFTWYTAVLAL). Residues 466–524 (KLELLRIREINGISADDIKKGTKKSTGYIRRTVIKAFSDDHAAGANTANQKADGPIIGR) are Cytoplasmic-facing. The helical transmembrane segment at 525–545 (VKLLMIVGFVVMHIFKFCSAF) threads the bilayer. The Lumenal portion of the chain corresponds to 546–622 (QSVGPQVNIT…DTYAVYIQHP (77 aa)). Asn-553 and Asn-596 each carry an N-linked (GlcNAc...) asparagine glycan. A helical transmembrane segment spans residues 623-643 (VISKWLTIALFVSLFLNTYLF). Over 644-1176 (NVAKQPKQIV…GTEPGTCIKS (533 aa)) the chain is Cytoplasmic. The segment at 699-724 (PNHKRSHNHHHSHSHSHNHHSNHHQS) is disordered. Positions 700–721 (NHKRSHNHHHSHSHSHNHHSNH) are enriched in basic residues. Residue Glu-841 is the Charge relay system of the active site. 847–853 (STARGCK) contributes to the CoA binding site. NADP(+) is bound by residues 907 to 909 (SRF) and 934 to 942 (DAMGMNMIS). Lys-972 functions as the Charge relay system in the catalytic mechanism. Residue 1001 to 1003 (VLK) participates in CoA binding. The Charge relay system role is filled by Asp-1048. Residue 1145–1146 (AH) coordinates CoA. Residue His-1146 is the Proton donor of the active site. 1150-1151 (NR) lines the NADP(+) pocket. Positions 1153–1176 (TQAPTITSGPAPSTGTEPGTCIKS) are disordered.

It belongs to the HMG-CoA reductase family.

It localises to the endoplasmic reticulum membrane. The enzyme catalyses (R)-mevalonate + 2 NADP(+) + CoA = (3S)-3-hydroxy-3-methylglutaryl-CoA + 2 NADPH + 2 H(+). Its pathway is metabolic intermediate biosynthesis; (R)-mevalonate biosynthesis; (R)-mevalonate from acetyl-CoA: step 3/3. Its function is as follows. HMG-CoA reductase; part of the first module of ergosterol biosynthesis pathway that includes the early steps of the pathway, conserved across all eukaryotes, and which results in the formation of mevalonate from acetyl-coenzyme A (acetyl-CoA). In this module, the cytosolic acetyl-CoA acetyltransferase catalyzes the formation of acetoacetyl-CoA. The hydroxymethylglutaryl-CoA synthase then condenses acetyl-CoA with acetoacetyl-CoA to form HMG-CoA. The rate-limiting step of the early module is the reduction to mevalonate by the 3-hydroxy-3-methylglutaryl-coenzyme A (HMG-CoA) reductase hmgA. This chain is 3-hydroxy-3-methylglutaryl-coenzyme A reductase, found in Phycomyces blakesleeanus (strain ATCC 8743b / DSM 1359 / FGSC 10004 / NBRC 33097 / NRRL 1555).